Here is a 443-residue protein sequence, read N- to C-terminus: MVRGRISRLSVRDVRFPTSLGGHGADAMHTDPDYSAAYVVIETDAEDGIKGCGITFTLGKGTEVVVCAVNALAHHVLNKDLKDIVGDFRGFYRQLTSDGQLRWIGPEKGVVHLATAAVLNAVWDLWAKQEGKPVWKLLVDMDPRMLVSCIDFRYITDVLTEEDALEILQKGQIGKKEREKQMLAQGYPAYTTSCAWLGYSDDTLKQLCAQALKDGWTRFKVKVGADLQDDMRRCQIIRDMIGPEKTLMMDANQRWDVPEAVEWMSKLAKFKPLWIEEPTSPDDILGHATISKALVPLGIGIATGEQCHNRVIFKQLLQAKALQFLQIDSCRLGSVNENLSVLLMAKKFEIPVCPHAGGVGLCELVQHLIIFDYISVSASLENRVCEYVDHLHEHFKYPVMIQRASYMPPKDPGYSTEMKEESVKKHQYPDGEVWKKLLPAQEN.

Substrate is bound by residues 24-26 (GAD) and tyrosine 34. Phosphoserine is present on serine 148. Lysine 220 lines the substrate pocket. Lysine 222 acts as the Proton donor/acceptor in catalysis. Aspartate 250 is a binding site for Mg(2+). Residues asparagine 252, glutamate 276, glutamate 305, 355–357 (HAG), and glutamate 386 contribute to the substrate site. Mg(2+) contacts are provided by glutamate 276 and glutamate 305. Residue histidine 355 is part of the active site.

The protein belongs to the mandelate racemase/muconate lactonizing enzyme family. ENOSF1 subfamily. Requires Mg(2+) as cofactor. Post-translationally, could be sumoylated.

The protein localises to the mitochondrion. The enzyme catalyses L-fuconate = 2-dehydro-3-deoxy-L-fuconate + H2O. In terms of biological role, plays a role in the catabolism of L-fucose, a sugar that is part of the carbohydrates that are attached to cellular glycoproteins. Catalyzes the dehydration of L-fuconate to 2-keto-3-deoxy-L-fuconate by the abstraction of the 2-proton to generate an enediolate intermediate that is stabilized by the magnesium ion. The sequence is that of Mitochondrial enolase superfamily member 1 (ENOSF1) from Homo sapiens (Human).